Consider the following 488-residue polypeptide: Inosine-5'-monophosphate dehydrogenase (488 aa).

CBS domains are found at residues 95–153 (VITN…SIKI) and 157–213 (MTKE…PHAA). Residues Asp250 and 300–302 (GIG) contribute to the NAD(+) site. K(+) contacts are provided by Gly302 and Gly304. Ser305 contributes to the IMP binding site. Cys307 serves as a coordination point for K(+). The active-site Thioimidate intermediate is the Cys307. Residues 340–342 (DGG), 363–364 (GS), and 387–391 (YRGMG) contribute to the IMP site. The active-site Proton acceptor is the Arg403. Glu417 serves as a coordination point for IMP. Positions 467–488 (AGLAESHPHNVQITKESPNYSF) are disordered. K(+)-binding residues include Glu471, Ser472, and His473. Residues 475 to 488 (HNVQITKESPNYSF) show a composition bias toward polar residues.

It belongs to the IMPDH/GMPR family. As to quaternary structure, homotetramer. K(+) serves as cofactor.

It catalyses the reaction IMP + NAD(+) + H2O = XMP + NADH + H(+). Its pathway is purine metabolism; XMP biosynthesis via de novo pathway; XMP from IMP: step 1/1. Its activity is regulated as follows. Mycophenolic acid (MPA) is a non-competitive inhibitor that prevents formation of the closed enzyme conformation by binding to the same site as the amobile flap. In contrast, mizoribine monophosphate (MZP) is a competitive inhibitor that induces the closed conformation. MPA is a potent inhibitor of mammalian IMPDHs but a poor inhibitor of the bacterial enzymes. MZP is a more potent inhibitor of bacterial IMPDH. In terms of biological role, catalyzes the conversion of inosine 5'-phosphate (IMP) to xanthosine 5'-phosphate (XMP), the first committed and rate-limiting step in the de novo synthesis of guanine nucleotides, and therefore plays an important role in the regulation of cell growth. The chain is Inosine-5'-monophosphate dehydrogenase from Staphylococcus haemolyticus (strain JCSC1435).